A 781-amino-acid polypeptide reads, in one-letter code: Cytosolic phospholipase A2 beta (781 aa).

The region spanning Met1 to Phe112 is the C2 domain. Residues Asp26, Asp32, Asp82, Asp84, and Asp90 each coordinate Ca(2+). The region spanning Glu246–His781 is the PLA2c domain. Ser335 (nucleophile) is an active-site residue. The Proton acceptor role is filled by Asp615.

It depends on Ca(2+) as a cofactor. In terms of tissue distribution, widely expressed. Expressed at higher level in brain, heart, liver, cerebellum and pancreas.

The protein localises to the cytoplasm. Its subcellular location is the cytosol. The protein resides in the mitochondrion membrane. It is found in the early endosome membrane. The enzyme catalyses a 1,2-diacyl-sn-glycero-3-phosphocholine + H2O = a 1-acyl-sn-glycero-3-phosphocholine + a fatty acid + H(+). It carries out the reaction a 1-acyl-sn-glycero-3-phosphocholine + H2O = sn-glycerol 3-phosphocholine + a fatty acid + H(+). It catalyses the reaction 1-hexadecanoyl-2-(9Z,12Z-octadecadienoyl)-sn-glycero-3-phosphoethanolamine + H2O = 1-hexadecanoyl-sn-glycero-3-phosphoethanolamine + (9Z,12Z)-octadecadienoate + H(+). The catalysed reaction is 1-hexadecanoyl-2-(5Z,8Z,11Z,14Z-eicosatetraenoyl)-sn-glycero-3-phosphoethanolamine + H2O = 1-hexadecanoyl-sn-glycero-3-phosphoethanolamine + (5Z,8Z,11Z,14Z)-eicosatetraenoate + H(+). The enzyme catalyses 1-hexadecanoyl-sn-glycero-3-phosphocholine + H2O = sn-glycerol 3-phosphocholine + hexadecanoate + H(+). It carries out the reaction 1-hexadecanoyl-2-(5Z,8Z,11Z,14Z-eicosatetraenoyl)-sn-glycero-3-phosphocholine + H2O = 1-hexadecanoyl-sn-glycero-3-phosphocholine + (5Z,8Z,11Z,14Z)-eicosatetraenoate + H(+). It catalyses the reaction 1-hexadecanoyl-2-(5Z,8Z,11Z,14Z-eicosatetraenoyl)-sn-glycero-3-phosphocholine + H2O = 2-(5Z,8Z,11Z,14Z)-eicosatetraenoyl-sn-glycero-3-phosphocholine + hexadecanoate + H(+). Stimulated by cytosolic Ca(2+). Its function is as follows. Calcium-dependent phospholipase A1 and A2 and lysophospholipase that may play a role in membrane phospholipid remodeling. Calcium-dependent phospholipase A2 and lysophospholipase. Cleaves the ester bond of the fatty acyl group attached to the sn-2 position of phosphatidylethanolamines, producing lysophospholipids that may be used in deacylation-reacylation cycles. Hydrolyzes lysophosphatidylcholines with low efficiency but is inefficient toward phosphatidylcholines. Functionally, calcium-dependent phospholipase A1 and A2 and lysophospholipase. Cleaves the ester bond of the fatty acyl group attached to the sn-1 or sn-2 position of diacyl phospholipids (phospholipase A1 and A2 activity, respectively), producing lysophospholipids that may be used in deacylation-reacylation cycles. Can further hydrolyze lysophospholipids enabling complete deacylation. Has no activity toward alkylacyl phospholipids. In Homo sapiens (Human), this protein is Cytosolic phospholipase A2 beta (PLA2G4B).